Consider the following 428-residue polypeptide: Enolase 1 (428 aa).

Gln-167 is a binding site for (2R)-2-phosphoglycerate. The Proton donor role is filled by Glu-209. Asp-246, Glu-288, and Asp-315 together coordinate Mg(2+). Residues Lys-340, Arg-369, Ser-370, and Lys-391 each contribute to the (2R)-2-phosphoglycerate site. The active-site Proton acceptor is Lys-340.

The protein belongs to the enolase family. In terms of assembly, component of the RNA degradosome, a multiprotein complex involved in RNA processing and mRNA degradation. The cofactor is Mg(2+).

The protein resides in the cytoplasm. The protein localises to the secreted. It is found in the cell surface. The enzyme catalyses (2R)-2-phosphoglycerate = phosphoenolpyruvate + H2O. It participates in carbohydrate degradation; glycolysis; pyruvate from D-glyceraldehyde 3-phosphate: step 4/5. Its function is as follows. Catalyzes the reversible conversion of 2-phosphoglycerate (2-PG) into phosphoenolpyruvate (PEP). It is essential for the degradation of carbohydrates via glycolysis. This Pseudomonas syringae pv. tomato (strain ATCC BAA-871 / DC3000) protein is Enolase 1.